A 174-amino-acid chain; its full sequence is Cytochrome c-type biogenesis protein CcmE (174 aa).

Topologically, residues 1 to 8 (MNPRRKSR) are cytoplasmic. A helical; Signal-anchor for type II membrane protein membrane pass occupies residues 9–29 (LSVVLFILLGISVASALVLYA). Residues 30-174 (LRQNIDLFYT…QEKQFKEGNQ (145 aa)) lie on the Periplasmic side of the membrane. 2 residues coordinate heme: histidine 131 and tyrosine 135. A disordered region spans residues 149–174 (KPMGISDLKNESDRDRQEKQFKEGNQ). The segment covering 156-174 (LKNESDRDRQEKQFKEGNQ) has biased composition (basic and acidic residues).

This sequence belongs to the CcmE/CycJ family.

It is found in the cell inner membrane. In terms of biological role, heme chaperone required for the biogenesis of c-type cytochromes. Transiently binds heme delivered by CcmC and transfers the heme to apo-cytochromes in a process facilitated by CcmF and CcmH. In Histophilus somni (strain 2336) (Haemophilus somnus), this protein is Cytochrome c-type biogenesis protein CcmE.